The following is a 304-amino-acid chain: tRNA dimethylallyltransferase (304 aa).

10–17 (GPTASGKT) contributes to the ATP binding site. 12-17 (TASGKT) lines the substrate pocket. Interaction with substrate tRNA stretches follow at residues 35–38 (DSAL), 159–163 (QRLSR), and 240–245 (RCVGYR).

This sequence belongs to the IPP transferase family. In terms of assembly, monomer. Mg(2+) serves as cofactor.

It carries out the reaction adenosine(37) in tRNA + dimethylallyl diphosphate = N(6)-dimethylallyladenosine(37) in tRNA + diphosphate. Its function is as follows. Catalyzes the transfer of a dimethylallyl group onto the adenine at position 37 in tRNAs that read codons beginning with uridine, leading to the formation of N6-(dimethylallyl)adenosine (i(6)A). The chain is tRNA dimethylallyltransferase from Shewanella putrefaciens (strain CN-32 / ATCC BAA-453).